Consider the following 594-residue polypeptide: DEAD-box ATP-dependent RNA helicase 25 (594 aa).

Disordered stretches follow at residues arginine 56–leucine 80 and glycine 92–serine 121. The Q motif signature appears at threonine 126–glutamate 154. The Helicase ATP-binding domain occupies leucine 157 to phenylalanine 340. Alanine 170–threonine 177 is an ATP binding site. A DEAD box motif is present at residues aspartate 288 to aspartate 291. The region spanning isoleucine 370–valine 520 is the Helicase C-terminal domain.

The protein belongs to the DEAD box helicase family.

The enzyme catalyses ATP + H2O = ADP + phosphate + H(+). The protein is DEAD-box ATP-dependent RNA helicase 25 of Oryza sativa subsp. japonica (Rice).